The sequence spans 642 residues: tRNA uridine 5-carboxymethylaminomethyl modification enzyme MnmG (642 aa).

Residue 24-29 (GGGHAG) coordinates FAD. 284-298 (GPRYCPSIEDKIHRF) contacts NAD(+).

The protein belongs to the MnmG family. Homodimer. Heterotetramer of two MnmE and two MnmG subunits. It depends on FAD as a cofactor.

It is found in the cytoplasm. Functionally, NAD-binding protein involved in the addition of a carboxymethylaminomethyl (cmnm) group at the wobble position (U34) of certain tRNAs, forming tRNA-cmnm(5)s(2)U34. The polypeptide is tRNA uridine 5-carboxymethylaminomethyl modification enzyme MnmG (Psychrobacter sp. (strain PRwf-1)).